The chain runs to 489 residues: Topoisomerase I damage affected protein 11 (489 aa).

Disordered stretches follow at residues 1–199 (MDQK…QSMA), 263–321 (INVS…DDNK), 344–370 (ERTL…KSVS), 391–413 (EDGH…HGQV), and 439–477 (DDNS…DSTL). Polar residues predominate over residues 19–35 (DTSSRYTTGSISPQFAS). Residues 73–89 (EESHNHPLKEDKSESRQ) are compositionally biased toward basic and acidic residues. Polar residues-rich tracts occupy residues 90–103 (RQVS…SSKG), 128–147 (PQSQ…NLHP), and 156–167 (NATTQTPSSMSM). The span at 182-197 (SSKRNSMHSRTSSSQS) shows a compositional bias: low complexity. The stretch at 210-266 (VNALLQSLANKELELLECKRKIDDLKKQLHMEENIYQNKANELQELKNKVSKNINVS) forms a coiled coil. A compositionally biased stretch (polar residues) spans 263–281 (INVSGSNQPVFNKTSTTGR). Polar residues predominate over residues 396–411 (TQQSNSNVNRPKNTHG). The span at 447 to 460 (KQRSGRTAVRKTKS) shows a compositional bias: basic residues. A compositionally biased stretch (acidic residues) spans 468–477 (DDSDDGDSTL).

This sequence belongs to the TDA11 family.

It is found in the cytoplasm. In Candida glabrata (strain ATCC 2001 / BCRC 20586 / JCM 3761 / NBRC 0622 / NRRL Y-65 / CBS 138) (Yeast), this protein is Topoisomerase I damage affected protein 11 (TDA11).